The chain runs to 149 residues: MKIWVDADACPKVIRETIVRAAERTGVECTFVANHVVPVPRRPNIHSLQVPAGFDIADNEIVKRVEPNDLVITSDIPLADEVITKGALALSSRGELYTKDTIKARLNIRDFMETMRSSGIQTGGPAALSQTERREFANHLDRILAKFKK.

It belongs to the UPF0178 family.

The polypeptide is UPF0178 protein VV1_1847 (Vibrio vulnificus (strain CMCP6)).